Consider the following 167-residue polypeptide: Transcription antitermination protein NusB (167 aa).

The disordered stretch occupies residues 1-32 (MSDTPETGKPAAGTKPAARTEAKAPPKSARRR).

The protein belongs to the NusB family.

In terms of biological role, involved in transcription antitermination. Required for transcription of ribosomal RNA (rRNA) genes. Binds specifically to the boxA antiterminator sequence of the ribosomal RNA (rrn) operons. This is Transcription antitermination protein NusB from Cupriavidus pinatubonensis (strain JMP 134 / LMG 1197) (Cupriavidus necator (strain JMP 134)).